A 94-amino-acid chain; its full sequence is DNA-binding protein HU (94 aa).

This sequence belongs to the bacterial histone-like protein family. Homodimer.

Histone-like DNA-binding protein which is capable of wrapping DNA to stabilize it, and thus to prevent its denaturation under extreme environmental conditions. It is essential for heterocyst differentiation. The chain is DNA-binding protein HU (hup) from Nostoc sp. (strain PCC 7120 / SAG 25.82 / UTEX 2576).